A 506-amino-acid polypeptide reads, in one-letter code: Probable cytosol aminopeptidase (506 aa).

Mn(2+) is bound by residues K278 and D283. The active site involves K290. Mn(2+) contacts are provided by D301, D360, and E362. R364 is a catalytic residue.

Belongs to the peptidase M17 family. It depends on Mn(2+) as a cofactor.

The protein resides in the cytoplasm. It carries out the reaction Release of an N-terminal amino acid, Xaa-|-Yaa-, in which Xaa is preferably Leu, but may be other amino acids including Pro although not Arg or Lys, and Yaa may be Pro. Amino acid amides and methyl esters are also readily hydrolyzed, but rates on arylamides are exceedingly low.. The catalysed reaction is Release of an N-terminal amino acid, preferentially leucine, but not glutamic or aspartic acids.. Functionally, presumably involved in the processing and regular turnover of intracellular proteins. Catalyzes the removal of unsubstituted N-terminal amino acids from various peptides. In Ralstonia nicotianae (strain ATCC BAA-1114 / GMI1000) (Ralstonia solanacearum), this protein is Probable cytosol aminopeptidase.